A 372-amino-acid polypeptide reads, in one-letter code: 3-galactosyl-N-acetylglucosaminide 4-alpha-L-fucosyltransferase FUT3 (372 aa).

Over 1–15 the chain is Cytoplasmic; it reads MDPLGAAKPQWPWRR. The helical; Signal-anchor for type II membrane protein transmembrane segment at 16-34 threads the bilayer; it reads CLAALLFQLLVAVCFFSYL. Over 35–372 the chain is Lumenal; sequence RVSRDDATGS…TMRSIAAWFT (338 aa). Residues 40 to 69 are disordered; it reads DATGSPRPGLMAVEPVTGAPSGSSRQDTTP. N-linked (GlcNAc...) asparagine glycans are attached at residues Asn-165 and Asn-196.

This sequence belongs to the glycosyltransferase 10 family. In terms of processing, glycosylated.

It is found in the golgi apparatus. It localises to the golgi stack membrane. The enzyme catalyses a beta-D-galactosyl-(1-&gt;3)-N-acetyl-beta-D-glucosaminyl derivative + GDP-beta-L-fucose = a beta-D-galactosyl-(1-&gt;3)-[alpha-L-fucosyl-(1-&gt;4)]-N-acetyl-beta-D-glucosaminyl derivative + GDP + H(+). The catalysed reaction is an N-acetyl-alpha-neuraminyl-(2-&gt;3)-beta-D-galactosyl-(1-&gt;4)-N-acetyl-beta-D-glucosaminyl derivative + GDP-beta-L-fucose = an alpha-Neu5Ac-(2-&gt;3)-beta-D-Gal-(1-&gt;4)-[alpha-L-Fuc-(1-&gt;3)]-beta-D-GlcNAc derivative + GDP + H(+). It carries out the reaction a beta-D-galactosyl-(1-&gt;4)-N-acetyl-beta-D-glucosaminyl derivative + GDP-beta-L-fucose = a beta-D-galactosyl-(1-&gt;4)-[alpha-L-fucosyl-(1-&gt;3)]-N-acetyl-beta-D-glucosaminyl derivative + GDP + H(+). It catalyses the reaction an alpha-Neu5Ac-(2-&gt;3)-beta-D-Gal-(1-&gt;4)-beta-D-GlcNAc-(1-&gt;3)-beta-D-Gal-(1-&gt;4)-[alpha-L-Fuc-(1-&gt;3)]-beta-D-GlcNAc derivative + GDP-beta-L-fucose = an alpha-Neu5Ac-(2-&gt;3)-beta-D-Gal-(1-&gt;4)-[alpha-L-Fuc-(1-&gt;3)]-beta-D-GlcNAc-(1-&gt;3)-beta-D-Gal-(1-&gt;4)-[alpha-L-Fuc-(1-&gt;3)]-beta-D-GlcNAc derivative + GDP + H(+). The enzyme catalyses Lc4Cer + GDP-beta-L-fucose = a lactoside III(4)-a-Fuc-Lc4Cer + GDP + H(+). The catalysed reaction is a beta-D-Gal-(1-&gt;3)-beta-D-GlcNAc-(1-&gt;3)-beta-D-Gal-(1-&gt;4)-beta-D-Glc-(1&lt;-&gt;1')-Cer(d18:1(4E)) + GDP-beta-L-fucose = a III(4)-a-Fuc-Lc4Cer(d18:1(4E)) + GDP + H(+). It carries out the reaction N-acetyl-alpha-neuraminosyl-(2-&gt;3)-beta-D-galactosyl-(1-&gt;3)-[N-acetyl-alpha-neuraminosyl-(2-&gt;6)]-N-acetyl-beta-D-glucosaminyl-(1-&gt;3)-beta-D-galactosyl-(1-&gt;4)-beta-D-glucosyl-(1&lt;-&gt;1')-N-acyl-sphing-4-enine + GDP-beta-L-fucose = N-acetyl-alpha-neuraminosyl-(2-&gt;3)-beta-D-galactosyl-(1-&gt;3)-alpha-L-fucosyl-(1-&gt;4)-[N-acetyl-alpha-neuraminosyl-(2-&gt;6)-N-acetyl-beta-D-glucosaminyl-(1-&gt;3)]-beta-D-galactosyl-(1-&gt;4)-beta-D-glucosyl-(1&lt;-&gt;1')-N-acyl-sphing-4-enine + GDP + H(+). It catalyses the reaction N-acetyl-alpha-neuraminosyl-(2-&gt;3)-beta-D-galactosyl-(1-&gt;3)-N-acetyl-beta-D-glucosaminyl-(1-&gt;3)-beta-D-galactosyl-(1-&gt;4)-beta-D-glucosyl-(1&lt;-&gt;1')-N-acyl-sphing-4-enine + GDP-beta-L-fucose = N-acetyl-alpha-neuraminosyl-(2-&gt;3)-beta-D-galactosyl-(1-&gt;3)-alpha-L-fucosyl-(1-&gt;4)-[N-acetyl-beta-D-glucosaminyl-(1-&gt;3)]-beta-D-galactosyl-(1-&gt;4)-beta-D-glucosyl-(1&lt;-&gt;1')-N-acyl-sphing-4-enine + GDP + H(+). The enzyme catalyses beta-D-galactosyl-(1-&gt;3)-N-acetyl-D-glucosamine + GDP-beta-L-fucose = beta-D-galactosyl-(1-&gt;3)-[alpha-L-fucosyl-(1-&gt;4)]-N-acetyl-D-glucosamine + GDP + H(+). The catalysed reaction is alpha-L-Fuc-(1-&gt;2)-beta-D-Gal-(1-&gt;3)-D-GlcNAc + GDP-beta-L-fucose = alpha-L-Fuc-(1-&gt;2)-beta-D-Gal-(1-&gt;3)-[alpha-L-Fuc-(1-&gt;4)]-D-GlcNAc + GDP + H(+). It carries out the reaction alpha-L-Fuc-(1-&gt;2)-beta-D-Gal-(1-&gt;4)-D-GlcNAc + GDP-beta-L-fucose = alpha-L-Fuc-(1-&gt;2)-beta-D-Gal-(1-&gt;4)-[alpha-L-Fuc-(1-&gt;3)]-D-GlcNAc + GDP + H(+). It catalyses the reaction beta-D-galactosyl-(1-&gt;4)-N-acetyl-D-glucosamine + GDP-beta-L-fucose = beta-D-galactosyl-(1-&gt;4)-[alpha-L-fucosyl-(1-&gt;3)]-N-acetyl-D-glucosamine + GDP + H(+). The enzyme catalyses lactose + GDP-beta-L-fucose = beta-D-galactosyl-(1-&gt;4)-[alpha-L-fucosyl-(1-&gt;3)]-D-glucose + GDP + H(+). The catalysed reaction is an alpha-Neu5Ac-(2-&gt;3)-beta-D-Gal-(1-&gt;3)-D-GlcNAc derivative + GDP-beta-L-fucose = an alpha-Neu5Ac-(2-&gt;3)-beta-D-Gal-(1-&gt;3)-[alpha-L-Fuc-(1-&gt;4)]-beta-D-GlcNAc derivative + GDP + H(+). It participates in protein modification; protein glycosylation. In terms of biological role, catalyzes the transfer of L-fucose, from a guanosine diphosphate-beta-L-fucose, to both the subterminal N-acetyl glucosamine (GlcNAc) of type 1 chain (beta-D-Gal-(1-&gt;3)-beta-D-GlcNAc) glycolipids and oligosaccharides via an alpha(1,4) linkage, and the subterminal glucose (Glc) or GlcNAc of type 2 chain (beta-D-Gal-(1-&gt;4)-beta-D-GlcNAc) oligosaccharides via an alpha(1,3) linkage, independently of the presence of terminal alpha-L-fucosyl-(1,2) moieties on the terminal galactose of these acceptors and participates in the blood groups Lewis determination and expression of Lewis a (Le(a)), lewis b (Le(b)), Lewis x/SSEA-1 (Le(x)) and lewis y (Le(y)) antigens. Also catalyzes the transfer of L-fucose to subterminal GlcNAc of sialyl- and disialyl-lactotetraosylceramide to produce sialyl Lewis a (sLe(a)) and disialyl Lewis a via an alpha(1,4) linkage and therefore may regulate cell surface sialyl Lewis a expression and consequently regulates adhesive properties to E-selectin, cell proliferation and migration. Catalyzes the transfer of an L-fucose to 3'-sialyl-N-acetyllactosamine by an alpha(1,3) linkage, which allows the formation of sialyl-Lewis x structure and therefore may regulate the sialyl-Lewis x surface antigen expression and consequently adhesive properties to E-selectin. Prefers type 1 chain over type 2 acceptors. Type 1 tetrasaccharide is a better acceptor than type 1 disaccharide suggesting that a beta anomeric configuration of GlcNAc in the substrate is preferred. Lewis-positive (Le(+)) individuals have an active enzyme while Lewis-negative (Le(-)) individuals have an inactive enzyme. The chain is 3-galactosyl-N-acetylglucosaminide 4-alpha-L-fucosyltransferase FUT3 from Pan troglodytes (Chimpanzee).